The primary structure comprises 447 residues: Putative branched-chain amino acid carrier protein SAUSA300_1300 (447 aa).

The next 12 membrane-spanning stretches (helical) occupy residues 6–26, 40–60, 74–94, 114–134, 143–163, 193–213, 229–249, 290–310, 326–346, 350–370, 382–402, and 417–437; these read WVIG…IFPP, ILAF…VGAL, PKFS…LFAI, SSIA…YICL, IGSL…IKGY, GYLT…VNAV, LTAG…LGYI, LLGI…IVAV, FVLV…NAVI, IPVL…ILIA, IPVI…LGWL, and LEWF…GIFV.

The protein belongs to the branched chain amino acid transporter family.

The protein localises to the cell membrane. Its function is as follows. Component of the transport system for branched-chain amino acids (leucine, isoleucine and valine), which is coupled to a proton motive force (Potential). Contributes to NaCl tolerance. The sequence is that of Putative branched-chain amino acid carrier protein SAUSA300_1300 from Staphylococcus aureus (strain USA300).